Consider the following 466-residue polypeptide: Soluble pyridine nucleotide transhydrogenase (466 aa).

Residue 36-45 (ERYHNVGGGC) participates in FAD binding.

This sequence belongs to the class-I pyridine nucleotide-disulfide oxidoreductase family. Requires FAD as cofactor.

It is found in the cytoplasm. The catalysed reaction is NAD(+) + NADPH = NADH + NADP(+). Its function is as follows. Conversion of NADPH, generated by peripheral catabolic pathways, to NADH, which can enter the respiratory chain for energy generation. The sequence is that of Soluble pyridine nucleotide transhydrogenase from Enterobacter sp. (strain 638).